Consider the following 258-residue polypeptide: Maintenance of carboxysome distribution protein A (258 aa).

The ATP site is built by Gly-11, Gly-12, Gln-13, Gly-14, Lys-15, Thr-16, Thr-17, Gln-40, Glu-147, Lys-151, Phe-182, Arg-183, Leu-216, Glu-217, Ser-218, and Tyr-221. Thr-16 contacts Mg(2+).

It belongs to the ParA family. McdA subfamily. As to quaternary structure, homodimerizes in the presence of ATP, making extra nucleotide contacts than with ADP or AMP-PNP. Each subunit binds 1 ATP molecule; Glu-147, Lys-151 and Arg-183 cross the dimer interface to contact ATP in the other subunit, while Phe-182, Arg-183 and Tyr-221 stack with the adenine base in their own subunit. Forms a complex with McdB.

The protein resides in the cytoplasm. Its subcellular location is the nucleoid. The enzyme catalyses ATP + H2O = ADP + phosphate + H(+). Its function is as follows. McdA and McdB together mediate carboxysome (Cb) spacing, size, ultrastructure and probably inheritance in the cell, together they prevent Cb aggregation. McdA is an ATPase that forms dynamic gradients on the nucleoid in response to adapter protein McdB, which associates with carboxysomes. The interplay between McdA gradients on the nucleoid and McdB-bound carboxysomes result in the equal spacing of Cbs along the cell length. Binds DNA saturably and strongly in the presence of Mg(2+)ATP; without ATP, DNA-binding is very poor (tested with a mutant that should not be able to hydrolyze ATP, Asp-38-Ala). Decreasing the NaCl concentration increases DNA binding. In terms of biological role, incorrect positioning (aggregation) of carboxysomes results in reduced CO(2) fixation by encapsulated ribulose-1,5-bisphosphate carboxylase (RuBisCO, cbbL/cbbS), which leads to slower growth. This chain is Maintenance of carboxysome distribution protein A, found in Gloeothece citriformis (strain PCC 7424) (Cyanothece sp. (strain PCC 7424)).